The following is a 424-amino-acid chain: Cytoplasmic tRNA 2-thiolation protein 2 (424 aa).

The interval 357-385 (PAAPETEEEEELSKKAHMEKSQEKTGDAD) is disordered. Over residues 368–385 (LSKKAHMEKSQEKTGDAD) the composition is skewed to basic and acidic residues.

Belongs to the CTU2/NCS2 family.

The protein localises to the cytoplasm. Its pathway is tRNA modification; 5-methoxycarbonylmethyl-2-thiouridine-tRNA biosynthesis. Plays a central role in 2-thiolation of mcm(5)S(2)U at tRNA wobble positions of tRNA(Lys), tRNA(Glu) and tRNA(Gln). May act by forming a heterodimer with NCS6 that ligates sulfur from thiocarboxylated URM1 onto the uridine of tRNAs at wobble position. Prior mcm(5) tRNA modification by the elongator complex is required for 2-thiolation. May also be involved in protein urmylation. This chain is Cytoplasmic tRNA 2-thiolation protein 2, found in Yarrowia lipolytica (strain CLIB 122 / E 150) (Yeast).